A 54-amino-acid polypeptide reads, in one-letter code: ATP synthase F(0) complex subunit 8 (54 aa).

A helical membrane pass occupies residues 8 to 24; that stretch reads PWFSIMLLTWFTFSLLI.

This sequence belongs to the ATPase protein 8 family. Component of the ATP synthase complex composed at least of ATP5F1A/subunit alpha, ATP5F1B/subunit beta, ATP5MC1/subunit c (homooctomer), MT-ATP6/subunit a, MT-ATP8/subunit 8, ATP5ME/subunit e, ATP5MF/subunit f, ATP5MG/subunit g, ATP5MK/subunit k, ATP5MJ/subunit j, ATP5F1C/subunit gamma, ATP5F1D/subunit delta, ATP5F1E/subunit epsilon, ATP5PF/subunit F6, ATP5PB/subunit b, ATP5PD/subunit d, ATP5PO/subunit OSCP. ATP synthase complex consists of a soluble F(1) head domain (subunits alpha(3) and beta(3)) - the catalytic core - and a membrane F(0) domain - the membrane proton channel (subunits c, a, 8, e, f, g, k and j). These two domains are linked by a central stalk (subunits gamma, delta, and epsilon) rotating inside the F1 region and a stationary peripheral stalk (subunits F6, b, d, and OSCP).

The protein resides in the mitochondrion membrane. Subunit 8, of the mitochondrial membrane ATP synthase complex (F(1)F(0) ATP synthase or Complex V) that produces ATP from ADP in the presence of a proton gradient across the membrane which is generated by electron transport complexes of the respiratory chain. ATP synthase complex consist of a soluble F(1) head domain - the catalytic core - and a membrane F(1) domain - the membrane proton channel. These two domains are linked by a central stalk rotating inside the F(1) region and a stationary peripheral stalk. During catalysis, ATP synthesis in the catalytic domain of F(1) is coupled via a rotary mechanism of the central stalk subunits to proton translocation. In vivo, can only synthesize ATP although its ATP hydrolase activity can be activated artificially in vitro. Part of the complex F(0) domain. The protein is ATP synthase F(0) complex subunit 8 of Gallus gallus (Chicken).